Consider the following 72-residue polypeptide: UPF0154 protein BLi02038/BL02936 (72 aa).

A helical membrane pass occupies residues 4-24; the sequence is WVVILVGVLALLAGVALGFFI.

The protein belongs to the UPF0154 family.

Its subcellular location is the cell membrane. In Bacillus licheniformis (strain ATCC 14580 / DSM 13 / JCM 2505 / CCUG 7422 / NBRC 12200 / NCIMB 9375 / NCTC 10341 / NRRL NRS-1264 / Gibson 46), this protein is UPF0154 protein BLi02038/BL02936.